The following is a 47-amino-acid chain: Photosystem II reaction center protein K (47 aa).

Residues 1-10 constitute a propeptide that is removed on maturation; sequence MASFTLDLLA. A helical transmembrane segment spans residues 19 to 39; sequence FSPLIDILPLIPVFFLLLAFV.

The protein belongs to the PsbK family. PSII is composed of 1 copy each of membrane proteins PsbA, PsbB, PsbC, PsbD, PsbE, PsbF, PsbH, PsbI, PsbJ, PsbK, PsbL, PsbM, PsbT, PsbX, PsbY, PsbZ, Psb30/Ycf12, peripheral proteins PsbO, CyanoQ (PsbQ), PsbU, PsbV and a large number of cofactors. It forms dimeric complexes.

The protein resides in the cellular thylakoid membrane. In terms of biological role, one of the components of the core complex of photosystem II (PSII). PSII is a light-driven water:plastoquinone oxidoreductase that uses light energy to abstract electrons from H(2)O, generating O(2) and a proton gradient subsequently used for ATP formation. It consists of a core antenna complex that captures photons, and an electron transfer chain that converts photonic excitation into a charge separation. This Parasynechococcus marenigrum (strain WH8102) protein is Photosystem II reaction center protein K.